Here is a 459-residue protein sequence, read N- to C-terminus: WPP domain-interacting protein 3 (459 aa).

Polar residues predominate over residues 1 to 17 (MNESVPDSVEDNGNSVP). The tract at residues 1 to 78 (MNESVPDSVE…GPVRDEAAPV (78 aa)) is disordered. Residues 52–66 (STRKGFGLKKWRRIK) are compositionally biased toward basic residues. 2 short sequence motifs (nuclear localization signal) span residues 60–61 (KK) and 63–64 (RR). Residues 67 to 78 (RDGPVRDEAAPV) are compositionally biased toward basic and acidic residues. Positions 86 to 87 (KR) match the Nuclear localization signal 3 motif. Disordered regions lie at residues 240 to 266 (KEEVQTYSRSENGNKEDDGESKKNNNH) and 308 to 330 (TDELSSDQPSHQNCKEDNSTSSG). The span at 251–266 (NGNKEDDGESKKNNNH) shows a compositional bias: basic and acidic residues. Over residues 308-319 (TDELSSDQPSHQ) the composition is skewed to polar residues. Residues 331 to 375 (SKALILKEKVKLLEHKLEEARAALEAKEARIQELENSKIESELEC) are a coiled coil. The 34-residue stretch at 426–459 (KLGFYILTQLILLVSILRFLVLQFSPASRLVIPT) folds into the KASH domain. A helical membrane pass occupies residues 427 to 447 (LGFYILTQLILLVSILRFLVL).

As to quaternary structure, component of Ran complexes at least composed of WIT1 or WIT2, RANGAP1 or RANGAP2, and WIP1 or WIP2 or WIP3. Interacts with RANGAP1, WPP1/MAF1, and WPP2/MAF2. Interacts with SUN1 and SUN2. Core component of the LINC complex which is composed of inner nuclear membrane SUN domain-containing proteins coupled to outer nuclear membrane WIP and WIT proteins. The LINC complex also involves nucleoskeletal proteins CRWN/LINC and possibly KAKU4 and the cytoskeletal myosin KAKU1. Interacts with WIT2. As to expression, expressed in seedlings, roots, stems, leaves, and flowers.

Its subcellular location is the nucleus envelope. It localises to the nucleus membrane. Its function is as follows. Mediates and enhances the nuclear envelope docking of RANGAP proteins mediated by WIT1 and WIT2 in the undifferentiated cells of root tips. As component of the SUN-WIP-WIT2-KAKU1 complex, mediates the transfer of cytoplasmic forces to the nuclear envelope (NE), leading to nuclear shape changes. This is WPP domain-interacting protein 3 (WIP3) from Arabidopsis thaliana (Mouse-ear cress).